We begin with the raw amino-acid sequence, 221 residues long: Endo-1,4-beta-xylanase A (221 aa).

The N-terminal stretch at 1–16 is a signal peptide; that stretch reads MKFFATIAALVVGAVA. The GH11 domain occupies 29–221; it reads PMLIERAGPG…GTGSASVTVS (193 aa). Glu114 acts as the Nucleophile in catalysis. Glu208 serves as the catalytic Proton donor.

The protein belongs to the glycosyl hydrolase 11 (cellulase G) family.

The protein resides in the secreted. It carries out the reaction Endohydrolysis of (1-&gt;4)-beta-D-xylosidic linkages in xylans.. It participates in glycan degradation; xylan degradation. Its function is as follows. Endo-1,4-beta-xylanase involved in the hydrolysis of xylan, a major structural heterogeneous polysaccharide found in plant biomass representing the second most abundant polysaccharide in the biosphere, after cellulose. The sequence is that of Endo-1,4-beta-xylanase A (xynA) from Aureobasidium pullulans (Black yeast).